The primary structure comprises 579 residues: Tyrosine 3-monooxygenase (579 aa).

Residues 105 to 114 (VEFESVEQEQ) show a composition bias toward acidic residues. The tract at residues 105 to 132 (VEFESVEQEQSESQSQEPEGNQQPTKND) is disordered. Fe cation contacts are provided by histidine 409, histidine 414, and glutamate 454.

Belongs to the biopterin-dependent aromatic amino acid hydroxylase family. The cofactor is Fe(2+).

It localises to the cytoplasm. It is found in the perinuclear region. Its subcellular location is the cell projection. The protein resides in the axon. The catalysed reaction is (6R)-L-erythro-5,6,7,8-tetrahydrobiopterin + L-tyrosine + O2 = (4aS,6R)-4a-hydroxy-L-erythro-5,6,7,8-tetrahydrobiopterin + L-dopa. Its pathway is catecholamine biosynthesis; dopamine biosynthesis; dopamine from L-tyrosine: step 1/2. Its activity is regulated as follows. Phosphorylation leads to an increase in the catalytic activity. Its function is as follows. Plays an important role in the physiology of adrenergic neurons. In Drosophila melanogaster (Fruit fly), this protein is Tyrosine 3-monooxygenase (ple).